The primary structure comprises 549 residues: TBC1 domain family member 3 (549 aa).

A Rab-GAP TBC domain is found at 101 to 293 (GMPMNIRGPM…RLWDVYLVEG (193 aa)). 2 S-palmitoyl cysteine lipidation sites follow: Cys-318 and Cys-325. The tract at residues 350-419 (LTRKKGDLPP…PRSSTPCPGG (70 aa)) is disordered. Over residues 398–417 (PRPIWSASPPRAPRSSTPCP) the composition is skewed to low complexity.

In terms of processing, ubiquitinated by a CUL7-based E3 ligase, which leads to proteasomal degradation. Post-translationally, palmitoylation is required for membrane localization and protects TBC1D3 from ubiquitination. Expressed in liver, skeletal muscle, kidney, pancreas, spleen, testis, ovary, small intestine and peripheral blood leukocytes. Overexpressed in prostate cancers.

It is found in the cell membrane. Acts as a GTPase activating protein for RAB5. Does not act on RAB4 or RAB11. In Homo sapiens (Human), this protein is TBC1 domain family member 3 (TBC1D3).